Here is a 504-residue protein sequence, read N- to C-terminus: Anaerobic nitric oxide reductase transcription regulator NorR (504 aa).

Asp-57 is subject to 4-aspartylphosphate. One can recognise a Sigma-54 factor interaction domain in the interval 187 to 416; sequence MIGLSPGMTQ…LEHAIHRAVV (230 aa). Residues 215-222 and 278-287 each bind ATP; these read GETGTGKE and ADNGTLFLDE. The segment at residues 479 to 498 is a DNA-binding region (H-T-H motif); that stretch reads WAACARMLETDVANLHRLAK.

It participates in nitrogen metabolism; nitric oxide reduction. Its function is as follows. Required for the expression of anaerobic nitric oxide (NO) reductase, acts as a transcriptional activator for at least the norVW operon. Activation also requires sigma-54. This Escherichia coli (strain SE11) protein is Anaerobic nitric oxide reductase transcription regulator NorR.